The primary structure comprises 195 residues: uncharacterized protein (195 aa).

The first 20 residues, 1–20, serve as a signal peptide directing secretion; it reads MLKFRLILTVLTVLLITVNG. The tract at residues 26 to 195 is disordered; it reads IENKSSTSSS…LHNQYPPQQN (170 aa). Residue N28 is glycosylated (N-linked (GlcNAc...) asparagine). Composition is skewed to low complexity over residues 29 to 43 and 74 to 104; these read KSSTSSSKSAASKPS and QSKTAQAQPQPSAQSTNKPSFQNGQQSGGNQ. Polar residues-rich tracts occupy residues 112–123 and 151–176; these read DPYQTGSYQGPY and PKNTVQSGYQQPMPGQQSMQVPNNGP.

Component of the acid-soluble organic matrix of calcified layers of the shell (at protein level).

The protein resides in the secreted. This is an uncharacterized protein from Lottia gigantea (Giant owl limpet).